The primary structure comprises 447 residues: Probable tRNA methyltransferase 9B (447 aa).

S212 is subject to Phosphoserine. Disordered regions lie at residues A274–D306 and W320–D348. The span at A276 to R286 shows a compositional bias: polar residues.

The protein belongs to the methyltransferase superfamily.

In terms of biological role, may modify wobble uridines in specific arginine and glutamic acid tRNAs. Acts as a tumor suppressor by promoting the expression of LIN9. The protein is Probable tRNA methyltransferase 9B (Trmt9b) of Mus musculus (Mouse).